The chain runs to 417 residues: Monooxygenase cfoF (417 aa).

Residues 45–48 (DRDK), R126, and D327 contribute to the FAD site. A compositionally biased stretch (basic and acidic residues) spans 389–399 (AHTTQLDRDQF). The interval 389–417 (AHTTQLDRDQFTDGSGANDFLVGQQHSDK) is disordered.

This sequence belongs to the aromatic-ring hydroxylase family. KMO subfamily. It depends on FAD as a cofactor.

Its pathway is secondary metabolite biosynthesis; flavonoid biosynthesis. Monooxygenase; part of the gene cluster that mediates the biosynthesis of chlorflavonin, a fungal flavonoid with acetolactate synthase inhibitory activity. Within the pathway, cfoF is responsible for the hydroxylation of the flavonoid skeleton at position C3. The pathway begins with the PKS-NRPS hybrid synthetase cfoA that uses benzoic acid or p-hydroxybenzoic acid as a starter unit with four rounds of chain elongation using malonyl-CoA to form the chalcone skeleton. Then, a new type of chalcone isomerase, cfoK, catalyzes the conversion of the chalcone into a flavanone by a histidine-mediated oxa-Michael addition mechanism. The desaturation of flavanone to flavone is catalyzed by a new type of flavone synthase, the flavin mononucleotide (FMN)-dependent oxidoreductase cfoJ. Monooxygenases cfoF, cfoG, and P450 cfoH are responsible for the hydroxylation of the flavonoid skeleton at sites C3, C8, and C2', respectively. Like cfoF, the dehydratase cfoI plays also a role in the hydroxylation of position C3. Methyltransferases cfoB, cfoC, and cfoD then catalyze the methylation of C7-OH, C8-OH, and C3-OH, respectively. Finally, the monooxygenase cfoE is responsible for the chlorination of flavonoid at position C3'. In Aspergillus candidus, this protein is Monooxygenase cfoF.